Reading from the N-terminus, the 187-residue chain is Large ribosomal subunit protein uL6 (187 aa).

The interval 159 to 187 is disordered; sequence PYKGKGIRYKGEQLSSNPERLQVRSKEVR.

Belongs to the universal ribosomal protein uL6 family. In terms of assembly, part of the 50S ribosomal subunit.

In terms of biological role, this protein binds to the 23S rRNA, and is important in its secondary structure. It is located near the subunit interface in the base of the L7/L12 stalk, and near the tRNA binding site of the peptidyltransferase center. In Aquifex pyrophilus, this protein is Large ribosomal subunit protein uL6.